We begin with the raw amino-acid sequence, 89 residues long: MAHTKKGGSSRNGRDSESKRLGVKKFGGEAVLAGNIIVRQRGTKWHPGANVGLGKDHTIFATVNGSVSFRTKANGRTYVSVNPIAEAAE.

Positions 1–22 are disordered; the sequence is MAHTKKGGSSRNGRDSESKRLG.

The protein belongs to the bacterial ribosomal protein bL27 family.

This Brucella melitensis biotype 1 (strain ATCC 23456 / CCUG 17765 / NCTC 10094 / 16M) protein is Large ribosomal subunit protein bL27.